We begin with the raw amino-acid sequence, 469 residues long: Putative dipeptidase SAB1611c (469 aa).

Histidine 84 contributes to the Zn(2+) binding site. Aspartate 86 is an active-site residue. Position 115 (aspartate 115) interacts with Zn(2+). Residue glutamate 149 is the Proton acceptor of the active site. Glutamate 150, aspartate 173, and histidine 440 together coordinate Zn(2+).

The protein belongs to the peptidase M20A family. The cofactor is Zn(2+).

The chain is Putative dipeptidase SAB1611c from Staphylococcus aureus (strain bovine RF122 / ET3-1).